Consider the following 447-residue polypeptide: Histidine--tRNA ligase (447 aa).

The protein belongs to the class-II aminoacyl-tRNA synthetase family. As to quaternary structure, homodimer.

The protein localises to the cytoplasm. The enzyme catalyses tRNA(His) + L-histidine + ATP = L-histidyl-tRNA(His) + AMP + diphosphate + H(+). The polypeptide is Histidine--tRNA ligase (hisS) (Synechocystis sp. (strain ATCC 27184 / PCC 6803 / Kazusa)).